A 525-amino-acid chain; its full sequence is Light-independent protochlorophyllide reductase subunit B (525 aa).

D36 contributes to the [4Fe-4S] cluster binding site. The active-site Proton donor is D292. 428 to 429 (GL) lines the substrate pocket. The disordered stretch occupies residues 447–470 (PSASSENGSAPLSAGTATPAAAPE). Over residues 460–470 (AGTATPAAAPE) the composition is skewed to low complexity.

This sequence belongs to the ChlB/BchB/BchZ family. As to quaternary structure, protochlorophyllide reductase is composed of three subunits; BchL, BchN and BchB. Forms a heterotetramer of two BchB and two BchN subunits. It depends on [4Fe-4S] cluster as a cofactor.

It carries out the reaction chlorophyllide a + oxidized 2[4Fe-4S]-[ferredoxin] + 2 ADP + 2 phosphate = protochlorophyllide a + reduced 2[4Fe-4S]-[ferredoxin] + 2 ATP + 2 H2O. It participates in porphyrin-containing compound metabolism; bacteriochlorophyll biosynthesis (light-independent). Functionally, component of the dark-operative protochlorophyllide reductase (DPOR) that uses Mg-ATP and reduced ferredoxin to reduce ring D of protochlorophyllide (Pchlide) to form chlorophyllide a (Chlide). This reaction is light-independent. The NB-protein (BchN-BchB) is the catalytic component of the complex. This chain is Light-independent protochlorophyllide reductase subunit B, found in Chlorobium luteolum (strain DSM 273 / BCRC 81028 / 2530) (Pelodictyon luteolum).